A 388-amino-acid chain; its full sequence is 3-dehydroquinate synthase (388 aa).

NAD(+) contacts are provided by residues 85-90 (DGEQYK), 119-123 (GVIGD), 143-144 (TT), Lys-156, Lys-165, and 183-186 (TLKT). The Zn(2+) site is built by Glu-198, His-261, and His-278.

The protein belongs to the sugar phosphate cyclases superfamily. Dehydroquinate synthase family. It depends on Co(2+) as a cofactor. The cofactor is Zn(2+). Requires NAD(+) as cofactor.

It localises to the cytoplasm. The catalysed reaction is 7-phospho-2-dehydro-3-deoxy-D-arabino-heptonate = 3-dehydroquinate + phosphate. It functions in the pathway metabolic intermediate biosynthesis; chorismate biosynthesis; chorismate from D-erythrose 4-phosphate and phosphoenolpyruvate: step 2/7. Its function is as follows. Catalyzes the conversion of 3-deoxy-D-arabino-heptulosonate 7-phosphate (DAHP) to dehydroquinate (DHQ). The chain is 3-dehydroquinate synthase from Psychrobacter arcticus (strain DSM 17307 / VKM B-2377 / 273-4).